The primary structure comprises 288 residues: MSQLIFIPLLISLLVTKGKIRFLNNFESVLALSLHYGILVLALPIFILLYKAKKQPCSILLKVTTEPIILSAYATTFSTAFLAITINALFGLIIAWILVKYEFTGKETLDAIVDLPFALPASVGGLTLMTVYSDRGWMGPICSGLGLKIVFSRLGVPMATIFVSLPFVVRTIQPVLQDVEEELEEAAWCIGASPWTTFCQISLPLLTPSLLTGTALGFSRAIGEYGSIVLIACNIPMKDLVISVLIFQKLEQYDYQGAIVVATIVLIASFGGLLIINKVQLWKQNLSK.

The next 7 membrane-spanning stretches (helical) occupy residues 4 to 23 (LIFI…IRFL), 29 to 49 (VLAL…FILL), 79 to 99 (TAFL…WILV), 111 to 131 (AIVD…LMTV), 149 to 169 (IVFS…PFVV), 227 to 247 (SIVL…VLIF), and 257 to 277 (GAIV…LIIN). In terms of domain architecture, ABC transmembrane type-1 spans 73 to 276 (YATTFSTAFL…IASFGGLLII (204 aa)).

The protein belongs to the binding-protein-dependent transport system permease family. CysTW subfamily.

The protein resides in the plastid. It is found in the chloroplast membrane. Part of the ABC transporter complex cysAWTP (TC 3.A.1.6.1) involved in sulfate/thiosulfate import. Probably responsible for the translocation of the substrate across the membrane. The sequence is that of Probable sulfate transport system permease protein cysT (cysT) from Anthoceros angustus (Hornwort).